Reading from the N-terminus, the 67-residue chain is Major cold shock protein (67 aa).

The 61-residue stretch at 4 to 64 (GTVKWFNAEK…GPKGLQAANV (61 aa)) folds into the CSD domain.

It is found in the cytoplasm. The sequence is that of Major cold shock protein (cspA) from Micrococcus luteus (strain ATCC 4698 / DSM 20030 / JCM 1464 / CCM 169 / CCUG 5858 / IAM 1056 / NBRC 3333 / NCIMB 9278 / NCTC 2665 / VKM Ac-2230) (Micrococcus lysodeikticus).